A 481-amino-acid chain; its full sequence is UDP-N-acetylmuramate--L-alanine ligase (481 aa).

122 to 128 (GVHGKTT) contacts ATP.

The protein belongs to the MurCDEF family.

It is found in the cytoplasm. The enzyme catalyses UDP-N-acetyl-alpha-D-muramate + L-alanine + ATP = UDP-N-acetyl-alpha-D-muramoyl-L-alanine + ADP + phosphate + H(+). The protein operates within cell wall biogenesis; peptidoglycan biosynthesis. Cell wall formation. The protein is UDP-N-acetylmuramate--L-alanine ligase of Treponema pallidum (strain Nichols).